The primary structure comprises 544 residues: Bacillolysin (544 aa).

An N-terminal signal peptide occupies residues 1-25; sequence MNKRAMLGAIGLAFGLMAWPFGASA. The propeptide at 26 to 225 is activation peptide; the sequence is KGKSMVWNEQ…DEAKPGGAQP (200 aa). Ca(2+)-binding residues include Asp-285, Asp-287, Gln-289, and Asp-366. Zn(2+) is bound at residue His-370. Residue Glu-371 is part of the active site. Residues His-374 and Glu-394 each contribute to the Zn(2+) site. Positions 405, 411, 413, 415, 418, 421, 422, 425, and 428 each coordinate Ca(2+). His-459 serves as the catalytic Proton donor.

This sequence belongs to the peptidase M4 family. Ca(2+) is required as a cofactor. Zn(2+) serves as cofactor.

Its subcellular location is the secreted. The enzyme catalyses Similar, but not identical, to that of thermolysin.. Extracellular zinc metalloprotease. The chain is Bacillolysin (npr) from Bacillus caldolyticus.